Consider the following 593-residue polypeptide: A-type ATP synthase subunit A (593 aa).

236–243 (GPFGSGKT) serves as a coordination point for ATP.

It belongs to the ATPase alpha/beta chains family. Has multiple subunits with at least A(3), B(3), C, D, E, F, H, I and proteolipid K(x).

It is found in the cell membrane. It carries out the reaction ATP + H2O + 4 H(+)(in) = ADP + phosphate + 5 H(+)(out). Its function is as follows. Component of the A-type ATP synthase that produces ATP from ADP in the presence of a proton gradient across the membrane. The A chain is the catalytic subunit. In Pyrobaculum arsenaticum (strain DSM 13514 / JCM 11321 / PZ6), this protein is A-type ATP synthase subunit A.